Consider the following 166-residue polypeptide: Ubiquitin-conjugating enzyme E2 13 (166 aa).

Residues 4 to 164 (QACLLLQKQL…VSRCVRKSQE (161 aa)) enclose the UBC core domain. C89 (glycyl thioester intermediate) is an active-site residue.

Belongs to the ubiquitin-conjugating enzyme family.

The catalysed reaction is S-ubiquitinyl-[E1 ubiquitin-activating enzyme]-L-cysteine + [E2 ubiquitin-conjugating enzyme]-L-cysteine = [E1 ubiquitin-activating enzyme]-L-cysteine + S-ubiquitinyl-[E2 ubiquitin-conjugating enzyme]-L-cysteine.. Its pathway is protein modification; protein ubiquitination. Its function is as follows. Accepts the ubiquitin from the E1 complex and catalyzes its covalent attachment to other proteins. Involved in the formation of multiubiquitin chains. Signal the protein for selective degradation. This Arabidopsis thaliana (Mouse-ear cress) protein is Ubiquitin-conjugating enzyme E2 13 (UBC13).